The following is a 171-amino-acid chain: HTH-type transcriptional regulator AldR (171 aa).

Residues 1-14 are compositionally biased toward polar residues; that stretch reads MSEGSSITGVQTPG. Residues 1 to 21 form a disordered region; the sequence is MSEGSSITGVQTPGSPKDVRA. The region spanning 24–85 is the HTH asnC-type domain; sequence LDDIDRRILL…DIDPAAVGLG (62 aa). The segment at residues 43–62 is a DNA-binding region (H-T-H motif); that stretch reads NSALAEMVGIAPSTCHGRVR.

As to quaternary structure, homodimer in the absence of L-alanine. Homooctamer in the presence of L-alanine. Homotetramers in the presence of L-cysteine.

With respect to regulation, in the presence of alanine, AldR changes its quaternary structure from a homodimer to an octamer with an open-ring conformation. The binding affinity of AldR for the ald control region is increased significantly by L-alanine. In vitro, L-cysteine also increases the binding affinity of AldR for the target DNA. Functionally, transcriptional regulator that might play a role under hypoxic conditions. Regulates the expression of ald, which encodes L-alanine dehydrogenase. Serves as both an activator for ald expression in the presence of L-alanine and a repressor in the absence of L-alanine. Acts by binding directly to the upstream region of the ald gene. Four AldR-binding sites (O2, O1, O4 and O3) were identified upstream of the ald gene. O2, O1 and O4 are required for the induction of ald expression by alanine, while O3 is directly involved in the repression of ald expression, by occluding the access of RNA polymerase to the ald promoter. In addition to O3, both O1 and O4 are also necessary for full repression of ald expression in the absence of alanine. This is HTH-type transcriptional regulator AldR from Mycolicibacterium smegmatis (strain ATCC 700084 / mc(2)155) (Mycobacterium smegmatis).